The primary structure comprises 239 residues: Ribonuclease HII (239 aa).

One can recognise an RNase H type-2 domain in the interval 18-231 (KIIVGLDEAG…SKNLLKEIEE (214 aa)). Residues Asp-24, Glu-25, and Asp-125 each contribute to the a divalent metal cation site.

The protein belongs to the RNase HII family. Mn(2+) serves as cofactor. It depends on Mg(2+) as a cofactor.

It is found in the cytoplasm. It catalyses the reaction Endonucleolytic cleavage to 5'-phosphomonoester.. Its function is as follows. Endonuclease that specifically degrades the RNA of RNA-DNA hybrids. The polypeptide is Ribonuclease HII (Methanococcus maripaludis (strain C6 / ATCC BAA-1332)).